The following is a 340-amino-acid chain: 4-hydroxy-3-methylbut-2-enyl diphosphate reductase (340 aa).

Cys19 contacts [4Fe-4S] cluster. The (2E)-4-hydroxy-3-methylbut-2-enyl diphosphate site is built by His50 and His90. Positions 50 and 90 each coordinate dimethylallyl diphosphate. Positions 50 and 90 each coordinate isopentenyl diphosphate. Cys112 contacts [4Fe-4S] cluster. His141 lines the (2E)-4-hydroxy-3-methylbut-2-enyl diphosphate pocket. His141 serves as a coordination point for dimethylallyl diphosphate. His141 contributes to the isopentenyl diphosphate binding site. The active-site Proton donor is the Glu143. Residue Thr190 coordinates (2E)-4-hydroxy-3-methylbut-2-enyl diphosphate. Cys220 contacts [4Fe-4S] cluster. 4 residues coordinate (2E)-4-hydroxy-3-methylbut-2-enyl diphosphate: Ser248, Ser249, Asn250, and Ser292. Ser248, Ser249, Asn250, and Ser292 together coordinate dimethylallyl diphosphate. Residues Ser248, Ser249, Asn250, and Ser292 each coordinate isopentenyl diphosphate.

The protein belongs to the IspH family. [4Fe-4S] cluster is required as a cofactor.

The enzyme catalyses isopentenyl diphosphate + 2 oxidized [2Fe-2S]-[ferredoxin] + H2O = (2E)-4-hydroxy-3-methylbut-2-enyl diphosphate + 2 reduced [2Fe-2S]-[ferredoxin] + 2 H(+). It catalyses the reaction dimethylallyl diphosphate + 2 oxidized [2Fe-2S]-[ferredoxin] + H2O = (2E)-4-hydroxy-3-methylbut-2-enyl diphosphate + 2 reduced [2Fe-2S]-[ferredoxin] + 2 H(+). It participates in isoprenoid biosynthesis; dimethylallyl diphosphate biosynthesis; dimethylallyl diphosphate from (2E)-4-hydroxy-3-methylbutenyl diphosphate: step 1/1. Its pathway is isoprenoid biosynthesis; isopentenyl diphosphate biosynthesis via DXP pathway; isopentenyl diphosphate from 1-deoxy-D-xylulose 5-phosphate: step 6/6. Its function is as follows. Catalyzes the conversion of 1-hydroxy-2-methyl-2-(E)-butenyl 4-diphosphate (HMBPP) into a mixture of isopentenyl diphosphate (IPP) and dimethylallyl diphosphate (DMAPP). Acts in the terminal step of the DOXP/MEP pathway for isoprenoid precursor biosynthesis. The chain is 4-hydroxy-3-methylbut-2-enyl diphosphate reductase from Thermus thermophilus (strain ATCC BAA-163 / DSM 7039 / HB27).